The sequence spans 306 residues: Putative S-adenosyl-L-methionine-dependent methyltransferase FRAAL5401 (306 aa).

S-adenosyl-L-methionine-binding positions include Asp126 and 155 to 156; that span reads DL. The tract at residues 201-225 is disordered; the sequence is LSAPESRVATENRPNPKPGDEDRTK.

It belongs to the UPF0677 family.

Exhibits S-adenosyl-L-methionine-dependent methyltransferase activity. The polypeptide is Putative S-adenosyl-L-methionine-dependent methyltransferase FRAAL5401 (Frankia alni (strain DSM 45986 / CECT 9034 / ACN14a)).